A 493-amino-acid chain; its full sequence is Putative BTB/POZ domain-containing protein L35 (493 aa).

The 72-residue stretch at 16–87 folds into the BTB domain; that stretch reads TDLKLTLVDD…YLVDNKSEVD (72 aa).

The protein belongs to the mimivirus BTB/WD family.

The polypeptide is Putative BTB/POZ domain-containing protein L35 (Acanthamoeba polyphaga (Amoeba)).